The chain runs to 917 residues: Glutamate receptor (917 aa).

A signal peptide spans 1-19; sequence MDTCVFPLVVLWISMRITS. Topologically, residues 20 to 556 are extracellular; sequence TLDEVPIGGI…HFFSFMEPLS (537 aa). Residues Asn-62, Asn-95, Asn-121, Asn-125, Asn-229, Asn-251, Asn-261, Asn-272, Asn-418, Asn-419, Asn-424, and Asn-491 are each glycosylated (N-linked (GlcNAc...) asparagine). A helical membrane pass occupies residues 557 to 577; it reads SEIWMCIVFAYIGVSVVLFLV. Residues 578–631 are Cytoplasmic-facing; that stretch reads SRFSPNEWHLSEAHHSYIANDFSISNSLWFSLGAFMQQGCDISPRSMSGRIVGS. The helical transmembrane segment at 632 to 652 threads the bilayer; it reads VWWFFTLIIISSYTANLAAFL. The Extracellular segment spans residues 653–818; the sequence is TVERMLTPID…GAQSALTLAN (166 aa). The N-linked (GlcNAc...) asparagine glycan is linked to Asn-775. The chain crosses the membrane as a helical span at residues 819 to 839; it reads VAGIFYILIGGLVVAVLSAAF. Over 840-917 the chain is Cytoplasmic; the sequence is EFLYKSRMDS…FEDSNTHTEV (78 aa). A disordered region spans residues 871–896; it reads HIDSEQKTTGNGTRRRSHNSVTYTYT.

It belongs to the glutamate-gated ion channel (TC 1.A.10.1) family.

It is found in the cell membrane. It localises to the postsynaptic cell membrane. Receptor for glutamate. L-glutamate acts as an excitatory neurotransmitter at many synapses in the central nervous system. The postsynaptic actions of Glu are mediated by a variety of receptors. In Lymnaea stagnalis (Great pond snail), this protein is Glutamate receptor.